The following is a 228-amino-acid chain: Deoxyribose-phosphate aldolase (228 aa).

The Proton donor/acceptor role is filled by aspartate 96. Lysine 157 serves as the catalytic Schiff-base intermediate with acetaldehyde. Lysine 185 (proton donor/acceptor) is an active-site residue.

It belongs to the DeoC/FbaB aldolase family. DeoC type 1 subfamily.

Its subcellular location is the cytoplasm. The catalysed reaction is 2-deoxy-D-ribose 5-phosphate = D-glyceraldehyde 3-phosphate + acetaldehyde. Its pathway is carbohydrate degradation; 2-deoxy-D-ribose 1-phosphate degradation; D-glyceraldehyde 3-phosphate and acetaldehyde from 2-deoxy-alpha-D-ribose 1-phosphate: step 2/2. Functionally, catalyzes a reversible aldol reaction between acetaldehyde and D-glyceraldehyde 3-phosphate to generate 2-deoxy-D-ribose 5-phosphate. This Picosynechococcus sp. (strain ATCC 27264 / PCC 7002 / PR-6) (Agmenellum quadruplicatum) protein is Deoxyribose-phosphate aldolase.